Here is a 149-residue protein sequence, read N- to C-terminus: Endothelin-1 (149 aa).

Residues 1 to 33 (AAETVVSGAELSLTANSGGEKTPPHAPGLLRRS) constitute a propeptide that is removed on maturation. The disordered stretch occupies residues 6 to 26 (VSGAELSLTANSGGEKTPPHA). 2 cysteine pairs are disulfide-bonded: cysteine 36-cysteine 50 and cysteine 38-cysteine 46. A propeptide spanning residues 57 to 149 (VNTPGHIAPY…ISQQLGNGKK (93 aa)) is cleaved from the precursor. The interval 93–107 (CQCANQKDKKCWNFC) is endothelin-like.

Belongs to the endothelin/sarafotoxin family.

It is found in the secreted. Its function is as follows. Endothelins are endothelium-derived vasoconstrictor peptides. Probable ligand for G-protein coupled receptors EDNRA and EDNRB which activates PTK2B, BCAR1, BCAR3 and, GTPases RAP1 and RHOA cascade in glomerular mesangial cells. Also binds the DEAR/FBXW7-AS1 receptor. Promotes mesenteric arterial wall remodeling via activation of ROCK signaling and subsequent colocalization of NFATC3 with F-actin filaments. NFATC3 then translocates to the nucleus where it subsequently promotes the transcription of the smooth muscle hypertrophy and differentiation marker ACTA2. This Cavia porcellus (Guinea pig) protein is Endothelin-1 (EDN1).